The primary structure comprises 52 residues: Proteinase inhibitor PSI-1.2 (52 aa).

Cystine bridges form between cysteine 3-cysteine 32, cysteine 7-cysteine 28, cysteine 16-cysteine 38, and cysteine 31-cysteine 49.

Its function is as follows. Potent inhibitor of trypsin and a weaker inhibitor of chymotrypsin. It does not inhibit elastase and subtilisin DY. The sequence is that of Proteinase inhibitor PSI-1.2 from Capsicum annuum (Capsicum pepper).